Consider the following 631-residue polypeptide: uncharacterized protein (631 aa).

This is an uncharacterized protein from Escherichia coli (strain K12).